The following is a 75-amino-acid chain: Defense protein 6 (75 aa).

Positions 1 to 20 (MKTCLVFAFFLVAVFAAVQA) are cleaved as a signal peptide. A propeptide spanning residues 21-32 (EENDSPQTLPRR) is cleaved from the precursor. Cystine bridges form between C44–C63, C49–C68, and C53–C70.

This sequence belongs to the invertebrate defensin family.

It is found in the secreted. Functionally, has antibacterial activity. This Lonomia obliqua (Moth) protein is Defense protein 6.